The primary structure comprises 179 residues: NADH dehydrogenase [ubiquinone] 1 beta subcomplex subunit 9 (179 aa).

Ala2 bears the N-acetylalanine mark. Ser85 carries the post-translational modification Phosphoserine. The tract at residues 136–162 (EVKQLQEETPPGGPLTEALPPARKEGD) is disordered.

The protein belongs to the complex I LYR family. In terms of assembly, mammalian complex I is composed of 45 different subunits.

The protein resides in the mitochondrion inner membrane. Accessory subunit of the mitochondrial membrane respiratory chain NADH dehydrogenase (Complex I), that is believed to be not involved in catalysis. Complex I functions in the transfer of electrons from NADH to the respiratory chain. The immediate electron acceptor for the enzyme is believed to be ubiquinone. The polypeptide is NADH dehydrogenase [ubiquinone] 1 beta subcomplex subunit 9 (NDUFB9) (Pan troglodytes (Chimpanzee)).